The chain runs to 202 residues: Nascent polypeptide-associated complex subunit alpha (202 aa).

Basic and acidic residues predominate over residues 1–19 (MADPRVEEIVEEETPKQTV). The segment at 1 to 41 (MADPRVEEIVEEETPKQTVEDAGSDSESEAGEANIPAGAAV) is disordered. Residues 45–110 (SRNEKKARKA…AKIEDLNSQA (66 aa)) form the NAC-A/B domain. Residues 117-127 (QLAAAEAAAGE) are compositionally biased toward low complexity. Residues 117 to 165 (QLAAAEAAAGEHAGHDHEHDLGTKVPEAETKKEEEEDDGEPVDESGLEA) are disordered. Residues 128–149 (HAGHDHEHDLGTKVPEAETKKE) are compositionally biased toward basic and acidic residues. Over residues 150–162 (EEEDDGEPVDESG) the composition is skewed to acidic residues. Residues 163–202 (LEAKDIELVMAQANVSRKKAVKALRENDNDIVNSIMALSI) enclose the UBA domain.

The protein belongs to the NAC-alpha family. As to quaternary structure, part of the nascent polypeptide-associated complex (NAC), consisting of egd2 and egd1. NAC associates with ribosomes via egd1.

Its subcellular location is the cytoplasm. It localises to the nucleus. In terms of biological role, component of the nascent polypeptide-associated complex (NAC), a dynamic component of the ribosomal exit tunnel, protecting the emerging polypeptides from interaction with other cytoplasmic proteins to ensure appropriate nascent protein targeting. The NAC complex also promotes mitochondrial protein import by enhancing productive ribosome interactions with the outer mitochondrial membrane and blocks the inappropriate interaction of ribosomes translating non-secretory nascent polypeptides with translocation sites in the membrane of the endoplasmic reticulum. Egd2 may also be involved in transcription regulation. The polypeptide is Nascent polypeptide-associated complex subunit alpha (egd2) (Aspergillus oryzae (strain ATCC 42149 / RIB 40) (Yellow koji mold)).